A 947-amino-acid polypeptide reads, in one-letter code: Plasma membrane ATPase 2 (947 aa).

The interval M1–V103 is disordered. Over M1–K144 the chain is Cytoplasmic. Residues K7 to D22 are compositionally biased toward basic and acidic residues. Positions P26–A61 are enriched in low complexity. The span at D62–I74 shows a compositional bias: acidic residues. A helical transmembrane segment spans residues F145–A165. At G166–D169 the chain is on the extracellular side. A helical transmembrane segment spans residues W170 to I189. Topologically, residues Q190–N320 are cytoplasmic. A helical transmembrane segment spans residues G321–F342. Over Y343–R353 the chain is Extracellular. The chain crosses the membrane as a helical span at residues Y354–A376. Residues V377–I748 lie on the Cytoplasmic side of the membrane. D407 acts as the 4-aspartylphosphate intermediate in catalysis. Mg(2+) is bound by residues D663 and D667. Residues N749–Y767 form a helical membrane-spanning segment. At D768 to R783 the chain is on the extracellular side. The helical transmembrane segment at L784–L803 threads the bilayer. Topologically, residues T804–Q853 are cytoplasmic. Residues L854 to W874 form a helical membrane-spanning segment. Over S875–R886 the chain is Extracellular. A helical transmembrane segment spans residues V887–Y903. The Cytoplasmic segment spans residues I904 to S947.

The protein belongs to the cation transport ATPase (P-type) (TC 3.A.3) family. Type IIIA subfamily.

The protein resides in the cell membrane. The enzyme catalyses ATP + H2O + H(+)(in) = ADP + phosphate + 2 H(+)(out). Functionally, the plasma membrane ATPase of plants and fungi is a hydrogen ion pump. The proton gradient it generates drives the active transport of nutrients by H(+)-symport. The resulting external acidification and/or internal alkinization may mediate growth responses. This chain is Plasma membrane ATPase 2 (PMA2), found in Saccharomyces cerevisiae (strain ATCC 204508 / S288c) (Baker's yeast).